A 91-amino-acid polypeptide reads, in one-letter code: DNA-directed RNA polymerase subunit omega (91 aa).

Belongs to the RNA polymerase subunit omega family. In terms of assembly, the RNAP catalytic core consists of 2 alpha, 1 beta, 1 beta' and 1 omega subunit. When a sigma factor is associated with the core the holoenzyme is formed, which can initiate transcription.

It catalyses the reaction RNA(n) + a ribonucleoside 5'-triphosphate = RNA(n+1) + diphosphate. Its function is as follows. Promotes RNA polymerase assembly. Latches the N- and C-terminal regions of the beta' subunit thereby facilitating its interaction with the beta and alpha subunits. The protein is DNA-directed RNA polymerase subunit omega of Pectobacterium carotovorum subsp. carotovorum (strain PC1).